Reading from the N-terminus, the 480-residue chain is Siroheme synthase (480 aa).

Residues 1–203 form a precorrin-2 dehydrogenase /sirohydrochlorin ferrochelatase region; sequence MNYFPIFANL…QQTAQAEQEL (203 aa). Residues 22 to 23 and 43 to 44 each bind NAD(+); these read SV and NQ. At Ser128 the chain carries Phosphoserine. Residues 214-480 form a uroporphyrinogen-III C-methyltransferase region; that stretch reads GFVSLVGAGP…GGLNAGQRAA (267 aa). Residue Pro223 coordinates S-adenosyl-L-methionine. Asp246 acts as the Proton acceptor in catalysis. Lys268 acts as the Proton donor in catalysis. S-adenosyl-L-methionine contacts are provided by residues 299–301, Val304, 329–330, Met381, and Gly410; these read GGD and TA.

It in the N-terminal section; belongs to the precorrin-2 dehydrogenase / sirohydrochlorin ferrochelatase family. The protein in the C-terminal section; belongs to the precorrin methyltransferase family.

The catalysed reaction is uroporphyrinogen III + 2 S-adenosyl-L-methionine = precorrin-2 + 2 S-adenosyl-L-homocysteine + H(+). It carries out the reaction precorrin-2 + NAD(+) = sirohydrochlorin + NADH + 2 H(+). It catalyses the reaction siroheme + 2 H(+) = sirohydrochlorin + Fe(2+). The protein operates within cofactor biosynthesis; adenosylcobalamin biosynthesis; precorrin-2 from uroporphyrinogen III: step 1/1. It participates in cofactor biosynthesis; adenosylcobalamin biosynthesis; sirohydrochlorin from precorrin-2: step 1/1. It functions in the pathway porphyrin-containing compound metabolism; siroheme biosynthesis; precorrin-2 from uroporphyrinogen III: step 1/1. Its pathway is porphyrin-containing compound metabolism; siroheme biosynthesis; siroheme from sirohydrochlorin: step 1/1. The protein operates within porphyrin-containing compound metabolism; siroheme biosynthesis; sirohydrochlorin from precorrin-2: step 1/1. In terms of biological role, multifunctional enzyme that catalyzes the SAM-dependent methylations of uroporphyrinogen III at position C-2 and C-7 to form precorrin-2 via precorrin-1. Then it catalyzes the NAD-dependent ring dehydrogenation of precorrin-2 to yield sirohydrochlorin. Finally, it catalyzes the ferrochelation of sirohydrochlorin to yield siroheme. The chain is Siroheme synthase from Neisseria meningitidis serogroup C (strain 053442).